Consider the following 360-residue polypeptide: D-alanine--D-alanine ligase (360 aa).

An ATP-grasp domain is found at 146–352 (KICAEHAGLH…FSQLIDRLLQ (207 aa)). ATP is bound at residue 179–234 (LEEFTLPFFVKPASQGSSIGITKVHRPEELAAALEKAFMVDTKVLIEKTIEGREIE). Residues Asp305, Glu319, and Asn321 each coordinate Mg(2+).

The protein belongs to the D-alanine--D-alanine ligase family. Requires Mg(2+) as cofactor. Mn(2+) serves as cofactor.

It is found in the cytoplasm. It catalyses the reaction 2 D-alanine + ATP = D-alanyl-D-alanine + ADP + phosphate + H(+). It functions in the pathway cell wall biogenesis; peptidoglycan biosynthesis. Functionally, cell wall formation. This chain is D-alanine--D-alanine ligase, found in Prosthecochloris aestuarii (strain DSM 271 / SK 413).